The sequence spans 122 residues: Large ribosomal subunit protein uL14c (122 aa).

The protein belongs to the universal ribosomal protein uL14 family. In terms of assembly, part of the 50S ribosomal subunit.

The protein localises to the plastid. Its subcellular location is the chloroplast. Functionally, binds to 23S rRNA. This is Large ribosomal subunit protein uL14c from Glycine max (Soybean).